A 401-amino-acid chain; its full sequence is Putative phosphatidylinositol 4-phosphate 5-kinase 11 (401 aa).

The PIPK domain maps to Met1–Phe390. The span at Ser242–Arg260 shows a compositional bias: polar residues. A disordered region spans residues Ser242 to Cys268. Residues Tyr350–Ser371 form an activation loop region.

It carries out the reaction a 1,2-diacyl-sn-glycero-3-phospho-(1D-myo-inositol 4-phosphate) + ATP = a 1,2-diacyl-sn-glycero-3-phospho-(1D-myo-inositol-4,5-bisphosphate) + ADP + H(+). The sequence is that of Putative phosphatidylinositol 4-phosphate 5-kinase 11 (PIP5K11) from Arabidopsis thaliana (Mouse-ear cress).